The chain runs to 233 residues: MIDHNIRTGKAFFGRRKGKRLRNSQLVLIKKLFPTLDINLNNSVPLNLTSLFSRKVKEVRLEIGFGGGEHLLHEMKHFPQTGFIGIEPFINGMAKMLMSLEEHKQYQNQLRLYNDDATGLLDWLPNASLDGIDLFYPDPWPKKKHWKRRFINMKNLNRFARVLKTGKKFRFASDIESYVNWTLYHCSNHHSFEWEAKNPKDWKTPYTLWSGTRYEAKALREGRAPTYLTFIKK.

4 residues coordinate S-adenosyl-L-methionine: Glu62, Glu87, Asp116, and Asp138. Asp138 is a catalytic residue. Substrate is bound by residues Lys142, Asp174, and 212–215 (TRYE).

It belongs to the class I-like SAM-binding methyltransferase superfamily. TrmB family.

It carries out the reaction guanosine(46) in tRNA + S-adenosyl-L-methionine = N(7)-methylguanosine(46) in tRNA + S-adenosyl-L-homocysteine. It participates in tRNA modification; N(7)-methylguanine-tRNA biosynthesis. Its function is as follows. Catalyzes the formation of N(7)-methylguanine at position 46 (m7G46) in tRNA. The polypeptide is tRNA (guanine-N(7)-)-methyltransferase (Bartonella henselae (strain ATCC 49882 / DSM 28221 / CCUG 30454 / Houston 1) (Rochalimaea henselae)).